Here is a 1033-residue protein sequence, read N- to C-terminus: PDZ domain-containing protein 7 (1033 aa).

PDZ domains are found at residues 86–168 and 210–293; these read SVRV…RMGR and IVHL…ETGR. A compositionally biased stretch (low complexity) spans 323 to 344; it reads ESSSSVSSCASSAPYSSGSLPS. 4 disordered regions span residues 323 to 380, 444 to 464, 754 to 864, and 943 to 1033; these read ESSS…GGRV, KQQR…LQRS, EPLS…KTVT, and MELV…PRIP. Residues 770–784 show a composition bias toward basic residues; the sequence is AQSRSRSRSRSRSRS. Positions 785 to 797 are enriched in low complexity; the sequence is SRGQGKSPGRRSP. The PDZ 3 domain occupies 862 to 934; that stretch reads TVTLSKMKQS…QRAVDTIRRA (73 aa). Pro residues predominate over residues 991 to 1000; it reads PEPPTNPQTP.

Homodimerizes (via PDZ2 domain). Component of USH2 complex, composed of ADGRV1, PDZD7, USH2A and WHRN. Interacts (via PDZ domains) with WHRN; the interaction is direct. Interacts with USH1G. Interacts with ADGRV1 (via the cytoplasmic region). Interacts with USH2A (via the cytoplasmic region). Interacts with MYO7A (via MyTH4-FERM domains). In terms of tissue distribution, weakly expressed in the inner ear. Expressed in the retinal pigment epithelium.

The protein resides in the cell projection. The protein localises to the cilium. Its subcellular location is the nucleus. It is found in the stereocilium. Its function is as follows. In cochlear developing hair cells, essential in organizing the USH2 complex at stereocilia ankle links. Blocks inhibition of adenylate cyclase activity mediated by ADGRV1. In Homo sapiens (Human), this protein is PDZ domain-containing protein 7.